Here is a 314-residue protein sequence, read N- to C-terminus: 3'-5' exoribonuclease YhaM (314 aa).

The HD domain maps to 163-279 (HVVSMLDLAK…LHYIDNLDAK (117 aa)).

This sequence belongs to the YhaM family.

Functionally, shows a 3'-5' exoribonuclease activity. The protein is 3'-5' exoribonuclease YhaM of Bacillus anthracis (strain CDC 684 / NRRL 3495).